Reading from the N-terminus, the 198-residue chain is V-type proton ATPase subunit E (198 aa).

This sequence belongs to the V-ATPase E subunit family.

Produces ATP from ADP in the presence of a proton gradient across the membrane. The polypeptide is V-type proton ATPase subunit E (Borrelia recurrentis (strain A1)).